The following is a 101-amino-acid chain: Small ribosomal subunit protein uS14 (101 aa).

It belongs to the universal ribosomal protein uS14 family. Part of the 30S ribosomal subunit. Contacts proteins S3 and S10.

Functionally, binds 16S rRNA, required for the assembly of 30S particles and may also be responsible for determining the conformation of the 16S rRNA at the A site. The sequence is that of Small ribosomal subunit protein uS14 from Vibrio vulnificus (strain CMCP6).